A 186-amino-acid chain; its full sequence is Ribosome-recycling factor (186 aa).

This sequence belongs to the RRF family.

The protein resides in the cytoplasm. Functionally, responsible for the release of ribosomes from messenger RNA at the termination of protein biosynthesis. May increase the efficiency of translation by recycling ribosomes from one round of translation to another. The chain is Ribosome-recycling factor from Burkholderia lata (strain ATCC 17760 / DSM 23089 / LMG 22485 / NCIMB 9086 / R18194 / 383).